The following is a 315-amino-acid chain: Methionyl-tRNA formyltransferase (315 aa).

113–116 (SILP) provides a ligand contact to (6S)-5,6,7,8-tetrahydrofolate.

This sequence belongs to the Fmt family.

The catalysed reaction is L-methionyl-tRNA(fMet) + (6R)-10-formyltetrahydrofolate = N-formyl-L-methionyl-tRNA(fMet) + (6S)-5,6,7,8-tetrahydrofolate + H(+). Its function is as follows. Attaches a formyl group to the free amino group of methionyl-tRNA(fMet). The formyl group appears to play a dual role in the initiator identity of N-formylmethionyl-tRNA by promoting its recognition by IF2 and preventing the misappropriation of this tRNA by the elongation apparatus. The chain is Methionyl-tRNA formyltransferase from Aliivibrio fischeri (strain ATCC 700601 / ES114) (Vibrio fischeri).